The following is a 366-amino-acid chain: BIIDXI-like protein At5g11420 (366 aa).

The first 22 residues, 1 to 22 (MKGGSLSFLFVLLIATITSVIC), serve as a signal peptide directing secretion. 3 N-linked (GlcNAc...) asparagine glycosylation sites follow: N98, N122, and N209.

In terms of assembly, interacts with PME3.

Its subcellular location is the secreted. It is found in the cell wall. Functionally, together with BIIDXI, acts as a positive regulator of PME3 activity during several developmental processes, including seed germination and endosperm (testa) rupture at the micropyle, probably by modulating the pectin status in cell walls. The polypeptide is BIIDXI-like protein At5g11420 (Arabidopsis thaliana (Mouse-ear cress)).